The sequence spans 284 residues: Acetylglutamate kinase (284 aa).

Substrate-binding positions include 64–65 (GG), Arg86, and Asn181.

This sequence belongs to the acetylglutamate kinase family. ArgB subfamily.

It is found in the cytoplasm. The catalysed reaction is N-acetyl-L-glutamate + ATP = N-acetyl-L-glutamyl 5-phosphate + ADP. The protein operates within amino-acid biosynthesis; L-arginine biosynthesis; N(2)-acetyl-L-ornithine from L-glutamate: step 2/4. Catalyzes the ATP-dependent phosphorylation of N-acetyl-L-glutamate. This Wolinella succinogenes (strain ATCC 29543 / DSM 1740 / CCUG 13145 / JCM 31913 / LMG 7466 / NCTC 11488 / FDC 602W) (Vibrio succinogenes) protein is Acetylglutamate kinase.